The chain runs to 181 residues: Transmembrane protein 47 (181 aa).

Alanine 2 carries the post-translational modification N-acetylalanine. 4 helical membrane-spanning segments follow: residues 21–41 (LVGLVCIFLALCLDLGAVLSP), 83–103 (ALLLGGAAIILIAFLVGLISI), 115–135 (VAVMLFAAVVLQVCSLVLYPI), and 152–172 (GYGLAWGATIFSFGGAILYCL).

The protein belongs to the TMEM47 family. Interacts with CTNNB1, CTNNA1, PRKCI, PARD6B, FYB1. In terms of tissue distribution, expressed in adult brain, fetal brain, cerebellum, heart, lung, prostate and thyroid.

Its subcellular location is the membrane. It localises to the cell junction. It is found in the adherens junction. Functionally, regulates cell junction organization in epithelial cells. May play a role in the transition from adherens junction to tight junction assembly. May regulate F-actin polymerization required for tight junctional localization dynamics and affect the junctional localization of PARD6B. During podocyte differentiation may negatively regulate activity of FYN and subsequently the abundance of nephrin. This chain is Transmembrane protein 47 (TMEM47), found in Homo sapiens (Human).